Consider the following 77-residue polypeptide: Acyl carrier protein (77 aa).

Residues 2–77 form the Carrier domain; the sequence is STVEERVKKI…DAIDYIVAHT (76 aa). Residue Ser37 is modified to O-(pantetheine 4'-phosphoryl)serine.

The protein belongs to the acyl carrier protein (ACP) family. Post-translationally, 4'-phosphopantetheine is transferred from CoA to a specific serine of apo-ACP by AcpS. This modification is essential for activity because fatty acids are bound in thioester linkage to the sulfhydryl of the prosthetic group.

It is found in the cytoplasm. Its pathway is lipid metabolism; fatty acid biosynthesis. Its function is as follows. Carrier of the growing fatty acid chain in fatty acid biosynthesis. The polypeptide is Acyl carrier protein (Marinobacter nauticus (strain ATCC 700491 / DSM 11845 / VT8) (Marinobacter aquaeolei)).